Reading from the N-terminus, the 253-residue chain is HTH-type transcriptional regulator YdeO (253 aa).

One can recognise an HTH araC/xylS-type domain in the interval 137–233; that stretch reads GKVRNIVNMK…GNSPKRVSKE (97 aa). 2 DNA-binding regions (H-T-H motif) span residues 154–175 and 200–223; these read KDIC…KQEQ and VNKI…RKHF.

Induces the expression of gadE and mdtEF. Could also regulate the expression of other genes involved in acid resistance. The sequence is that of HTH-type transcriptional regulator YdeO from Escherichia coli O157:H7.